Consider the following 327-residue polypeptide: Zinc transport protein ZntB (327 aa).

Residues 1-273 (MEAIKGSEVN…SRRSYTMSLM (273 aa)) are Cytoplasmic-facing. Residues 274 to 294 (AMVFLPSTFLTGLFGVNLGGI) form a helical membrane-spanning segment. Residues 295 to 300 (PGGGWH) lie on the Periplasmic side of the membrane. The chain crosses the membrane as a helical span at residues 301-321 (LGFSVFCVALVLLIGGVTWWL). Over 322–327 (HRSKWL) the chain is Cytoplasmic.

It belongs to the CorA metal ion transporter (MIT) (TC 1.A.35) family.

The protein localises to the cell inner membrane. The enzyme catalyses Zn(2+)(out) + H(+)(out) = Zn(2+)(in) + H(+)(in). Its function is as follows. Zinc transporter. Acts as a Zn(2+):proton symporter, which likely mediates zinc ion uptake. This chain is Zinc transport protein ZntB, found in Cronobacter sakazakii (strain ATCC BAA-894) (Enterobacter sakazakii).